Here is a 554-residue protein sequence, read N- to C-terminus: Hydroxylamine reductase (554 aa).

[2Fe-2S] cluster is bound by residues Cys-3, Cys-6, Cys-18, and Cys-25. Residues His-252, Glu-276, Cys-320, Cys-408, Cys-436, Cys-461, Glu-495, and Lys-497 each contribute to the hybrid [4Fe-2O-2S] cluster site. Cys-408 carries the cysteine persulfide modification.

It belongs to the HCP family. [2Fe-2S] cluster is required as a cofactor. It depends on hybrid [4Fe-2O-2S] cluster as a cofactor.

Its subcellular location is the cytoplasm. The enzyme catalyses A + NH4(+) + H2O = hydroxylamine + AH2 + H(+). Functionally, catalyzes the reduction of hydroxylamine to form NH(3) and H(2)O. This is Hydroxylamine reductase from Shewanella oneidensis (strain ATCC 700550 / JCM 31522 / CIP 106686 / LMG 19005 / NCIMB 14063 / MR-1).